We begin with the raw amino-acid sequence, 70 residues long: Conotoxin ba3a (70 aa).

Positions 1-20 (MLKIGVMLSIILVLFPLATL) are cleaved as a signal peptide. A propeptide spanning residues 21–55 (QLVAERPAAERYAENKQDLNPDERRNYLVDLGVER) is cleaved from the precursor.

In terms of tissue distribution, expressed by the venom duct.

Its subcellular location is the secreted. This Conus bayani (Bayan's cone) protein is Conotoxin ba3a.